Here is a 248-residue protein sequence, read N- to C-terminus: Ubiquinone/menaquinone biosynthesis C-methyltransferase UbiE (248 aa).

Residues S68, D92, and 120 to 121 each bind S-adenosyl-L-methionine; that span reads NA.

The protein belongs to the class I-like SAM-binding methyltransferase superfamily. MenG/UbiE family.

The enzyme catalyses a 2-demethylmenaquinol + S-adenosyl-L-methionine = a menaquinol + S-adenosyl-L-homocysteine + H(+). It catalyses the reaction a 2-methoxy-6-(all-trans-polyprenyl)benzene-1,4-diol + S-adenosyl-L-methionine = a 5-methoxy-2-methyl-3-(all-trans-polyprenyl)benzene-1,4-diol + S-adenosyl-L-homocysteine + H(+). It functions in the pathway quinol/quinone metabolism; menaquinone biosynthesis; menaquinol from 1,4-dihydroxy-2-naphthoate: step 2/2. It participates in cofactor biosynthesis; ubiquinone biosynthesis. Methyltransferase required for the conversion of demethylmenaquinol (DMKH2) to menaquinol (MKH2) and the conversion of 2-polyprenyl-6-methoxy-1,4-benzoquinol (DDMQH2) to 2-polyprenyl-3-methyl-6-methoxy-1,4-benzoquinol (DMQH2). The protein is Ubiquinone/menaquinone biosynthesis C-methyltransferase UbiE of Rickettsia prowazekii (strain Madrid E).